Reading from the N-terminus, the 144-residue chain is 3-dehydroquinate dehydratase (144 aa).

Tyr-24 (proton acceptor) is an active-site residue. Substrate is bound by residues Asn-76, His-82, and Asp-89. The active-site Proton donor is the His-102. Substrate-binding positions include 103 to 104 (LS) and Arg-113.

This sequence belongs to the type-II 3-dehydroquinase family. As to quaternary structure, homododecamer.

The enzyme catalyses 3-dehydroquinate = 3-dehydroshikimate + H2O. Its pathway is metabolic intermediate biosynthesis; chorismate biosynthesis; chorismate from D-erythrose 4-phosphate and phosphoenolpyruvate: step 3/7. Its function is as follows. Catalyzes a trans-dehydration via an enolate intermediate. This is 3-dehydroquinate dehydratase from Bordetella avium (strain 197N).